Here is a 384-residue protein sequence, read N- to C-terminus: Transcription factor TGA3 (384 aa).

Disordered stretches follow at residues 36–70 and 76–95; these read KSDI…NNRV and YNNS…EDRI. Low complexity predominate over residues 39-55; the sequence is INNITSNQNNNQSSSTT. Over residues 58–68 the composition is skewed to basic and acidic residues; it reads VDARPEADDNN. A compositionally biased stretch (polar residues) spans 76 to 88; the sequence is YNNSLEAEPSSNN. Residues 96-138 enclose the bZIP domain; sequence NDKMKRRLAQNREAARKSRLRKKAHVQQLEESRLKLSQLEQEL. The segment at 98-118 is basic motif; sequence KMKRRLAQNREAARKSRLRKK. A Nuclear localization signal motif is present at residues 99-106; it reads MKRRLAQN. Positions 117-144 form a coiled coil; that stretch reads KKAHVQQLEESRLKLSQLEQELVRARQQ. Positions 124 to 138 are leucine-zipper; the sequence is LEESRLKLSQLEQEL. In terms of domain architecture, DOG1 spans 167–379; that stretch reads IAAFEMEYTH…RALSSLWAAR (213 aa). Positions 219, 236, and 249 each coordinate hexadecanoate. The stretch at 267-296 forms a coiled coil; that stretch reads DQQLLEVRNLQQSSQQAEEALSQGLDKLQQ.

Belongs to the bZIP family. In terms of assembly, binds DNA as a dimer. Interacts with NPR3, NPR4 and sumoylated NPR1. Interacts with GRXC7/ROXY1. As to expression, expressed in the whole plant.

The protein resides in the nucleus. Transcriptional activator that binds specifically to the DNA sequence 5'-TGACG-3'. Recognizes ocs elements like the as-1 motif of the cauliflower mosaic virus 35S promoter. Binding to the as-1-like cis elements mediate auxin- and salicylic acid-inducible transcription. Required to induce the systemic acquired resistance (SAR) via the regulation of pathogenesis-related genes expression. Binding to the as-1 element of PR-1 promoter is salicylic acid-inducible and mediated by sumoylated NPR1. Could also bind to the Hex-motif (5'-TGACGTGG-3') another cis-acting element found in plant histone promoters. In Arabidopsis thaliana (Mouse-ear cress), this protein is Transcription factor TGA3.